Here is a 501-residue protein sequence, read N- to C-terminus: ATP synthase subunit alpha (501 aa).

An ATP-binding site is contributed by 169 to 176 (GDRQTGKT).

The protein belongs to the ATPase alpha/beta chains family. As to quaternary structure, F-type ATPases have 2 components, CF(1) - the catalytic core - and CF(0) - the membrane proton channel. CF(1) has five subunits: alpha(3), beta(3), gamma(1), delta(1), epsilon(1). CF(0) has three main subunits: a(1), b(2) and c(9-12). The alpha and beta chains form an alternating ring which encloses part of the gamma chain. CF(1) is attached to CF(0) by a central stalk formed by the gamma and epsilon chains, while a peripheral stalk is formed by the delta and b chains.

It localises to the cell membrane. The enzyme catalyses ATP + H2O + 4 H(+)(in) = ADP + phosphate + 5 H(+)(out). Its function is as follows. Produces ATP from ADP in the presence of a proton gradient across the membrane. The alpha chain is a regulatory subunit. This is ATP synthase subunit alpha from Streptococcus pneumoniae serotype 19F (strain G54).